The primary structure comprises 811 residues: Myb-like DNA-binding protein BAS1 (811 aa).

Residues 34–110 (HRKNGRNSWS…DVRKRWTGSL (77 aa)) form the Myb-like domain. HTH myb-type domains follow at residues 111–165 (DPNL…GPGS) and 166–218 (KGRL…TMVV). DNA-binding regions (H-T-H motif) lie at residues 138-161 (WLSI…IEVL) and 191-214 (WRKI…RKII). The span at 237–264 (DMTDGKLRQHPIADSDIRSDSTPNKEEQ) shows a compositional bias: basic and acidic residues. Disordered stretches follow at residues 237–320 (DMTD…SAPP), 348–379 (SQMN…DEHM), 535–713 (ATSH…LRDE), and 782–811 (LHNE…LNPS). Residues 265–275 (LQLSQQNNPSL) show a composition bias toward low complexity. Basic and acidic residues predominate over residues 282 to 298 (NVKENESSKLPRLKDND). Polar residues-rich tracts occupy residues 348-366 (SQMN…QTSL), 535-613 (ATSH…TSGS), and 653-664 (LNPSPNSVRSNG). The span at 782 to 794 (LHNEAKKTSEHDM) shows a compositional bias: basic and acidic residues.

In terms of assembly, monomer.

It is found in the nucleus. Activates HIS4 transcription only in combination with PHO2/BAS2. BAS1 is also involved in the regulation of the purine biosynthesis pathway. This Saccharomyces cerevisiae (strain ATCC 204508 / S288c) (Baker's yeast) protein is Myb-like DNA-binding protein BAS1 (BAS1).